Here is a 130-residue protein sequence, read N- to C-terminus: Small ribosomal subunit protein uS9 (130 aa).

This sequence belongs to the universal ribosomal protein uS9 family.

This chain is Small ribosomal subunit protein uS9, found in Aeromonas salmonicida (strain A449).